The chain runs to 215 residues: Heart- and neural crest derivatives-expressed protein 1 (215 aa).

Disordered stretches follow at residues 53 to 109 (APDF…RTES) and 169 to 202 (VDGGRESKRKRELQQHEGFPPALGPGEKRIKGRT). A compositionally biased stretch (low complexity) spans 65–75 (AAAAAATYGPD). Residues 92-104 (LGRRKGSGPKKER) are compositionally biased toward basic residues. The bHLH domain occupies 94–146 (RRKGSGPKKERRRTESINSAFAELRECIPNVPADTKLSKIKTLRLATSYIAYL). Position 107 is a phosphothreonine; by PLK4 (T107). Residue S109 is modified to Phosphoserine; by PLK4.

As to quaternary structure, efficient DNA binding requires dimerization with another bHLH protein. Forms homodimers and heterodimers with TCF3 gene products E12 and E47, HAND2 and HEY1, HEY2 and HEYL (hairy-related transcription factors). Interacts with MDFIC. Interacts with SOX15; the interaction enhances HAND1-induced differentiation of trophoblast giant cells. Post-translationally, phosphorylation by PLK4 disrupts the interaction with MDFIC and leads to translocation into the nucleoplasm, allowing dimerization and transcription factor activity.

The protein localises to the nucleus. The protein resides in the nucleoplasm. It is found in the nucleolus. Functionally, transcription factor that plays an essential role in both trophoblast giant cell differentiation and in cardiac morphogenesis. Binds the DNA sequence 5'-NRTCTG-3' (non-canonical E-box). Acts as a transcriptional repressor of SOX15. In the adult, could be required for ongoing expression of cardiac-specific genes. This Oryctolagus cuniculus (Rabbit) protein is Heart- and neural crest derivatives-expressed protein 1 (HAND1).